We begin with the raw amino-acid sequence, 188 residues long: MSTSETSSYTPDIPSEPVTKTTDTIHIELTPNDLDSLAATRFVRSPSAGATVLFIGTTRDSFNDKAVSSLSYTSYAPLAISTLYKIASNILTKHACTKIAIIHKLGECPIGEESIVIAVSAPHRKAAWLAGEEALEETKDKAEIWKLERFEGGEGVWRANRDGKVGERVDGGIAGLLGRIEVFADTNV.

Positions 1–10 (MSTSETSSYT) are enriched in polar residues. Residues 1-21 (MSTSETSSYTPDIPSEPVTKT) are disordered. Residues 123–124 (HR), lysine 139, and 146–148 (KLE) contribute to the substrate site.

It belongs to the MoaE family. MOCS2B subfamily. In terms of assembly, heterotetramer; composed of 2 small (MOCS2A) and 2 large (MOCS2B) subunits.

The protein resides in the cytoplasm. It catalyses the reaction 2 [molybdopterin-synthase sulfur-carrier protein]-C-terminal-Gly-aminoethanethioate + cyclic pyranopterin phosphate + H2O = molybdopterin + 2 [molybdopterin-synthase sulfur-carrier protein]-C-terminal Gly-Gly + 2 H(+). Its pathway is cofactor biosynthesis; molybdopterin biosynthesis. Its function is as follows. Catalytic subunit of the molybdopterin synthase complex, a complex that catalyzes the conversion of precursor Z into molybdopterin. Acts by mediating the incorporation of 2 sulfur atoms from thiocarboxylated MOCS2A into precursor Z to generate a dithiolene group. The protein is Molybdopterin synthase catalytic subunit of Phaeosphaeria nodorum (strain SN15 / ATCC MYA-4574 / FGSC 10173) (Glume blotch fungus).